Reading from the N-terminus, the 136-residue chain is Calmodulin-A (136 aa).

EF-hand domains follow at residues 1–36 (EQIA…LGQN), 37–72 (PTEA…KMKD), 74–109 (DSEE…LGEK), and 110–136 (LTDE…EEFV). Ca(2+) is bound by residues D14, D16, D18, T20, E25, D50, D52, N54, T56, E61, D87, D89, N91, Y93, and E98. K109 carries the N6,N6,N6-trimethyllysine modification. D123, D125, D127, Q129, and E134 together coordinate Ca(2+).

It belongs to the calmodulin family.

Calmodulin acts as part of a calcium signal transduction pathway by mediating the control of a large number of enzymes, ion channels, aquaporins and other proteins through calcium-binding. Calcium-binding is required for the activation of calmodulin. Among the enzymes to be stimulated by the calmodulin-calcium complex are a number of protein kinases, such as myosin light-chain kinases and calmodulin-dependent protein kinase type II (CaMK2), and phosphatases. The chain is Calmodulin-A (calm1) from Oryzias latipes (Japanese rice fish).